The sequence spans 95 residues: Large ribosomal subunit protein uL23 (95 aa).

Belongs to the universal ribosomal protein uL23 family. Part of the 50S ribosomal subunit. Contacts protein L29, and trigger factor when it is bound to the ribosome.

Functionally, one of the early assembly proteins it binds 23S rRNA. One of the proteins that surrounds the polypeptide exit tunnel on the outside of the ribosome. Forms the main docking site for trigger factor binding to the ribosome. The sequence is that of Large ribosomal subunit protein uL23 from Leuconostoc mesenteroides subsp. mesenteroides (strain ATCC 8293 / DSM 20343 / BCRC 11652 / CCM 1803 / JCM 6124 / NCDO 523 / NBRC 100496 / NCIMB 8023 / NCTC 12954 / NRRL B-1118 / 37Y).